A 562-amino-acid chain; its full sequence is MTLLSYLSSLCREATLSAFPQVENPSPDITQSTKEHFGHYQCNDAMKLDRTLKMAPRAIAEAIVNNLPKDNFSSVEVAGAGFINFTFSKEFLKQRLETFSADLSSGFCVKDPKKIVIDFSSPNIAKDMHVGHLRSTIIGDCLARVFSFVGNDVLRLNHIGDWGTAFGMLITYLQEEASEDVGNLEDLTALYKKAHARFAEDVEFKKRSQANVVALQSGDPSALNLWKHICEISERAFQKIYDILGVAIEKRGESFYNPFLPEIIQDLENKKLITVSDNAKCVFHEGFSIPLMVQKSDGGYNYATTDLAAMRYRVEKDHADKIIIVTDMGQSLHFQLLEATALAAGYLRDKETFSHVGFGLVLDSEGKKFKTRSGENIKLKELLNTAVDQAVATLKEHRPEMSEEEISQRAPILGINAIKYADLSSHRVSDYVFSFEKMLRFEGNTAMFLLYAYVRIQGIKRRLNIEKLNLEAVVNIQEPAEEALALALLRFPEAIDVTLKELCPHFLTDYLYMLTNKFNAFFRDCHIEGSPYQQERLYLCALVEKTLATGMHLLGLQTLDRL.

Positions 122–132 (PNIAKDMHVGH) match the 'HIGH' region motif.

This sequence belongs to the class-I aminoacyl-tRNA synthetase family. In terms of assembly, monomer.

The protein resides in the cytoplasm. The enzyme catalyses tRNA(Arg) + L-arginine + ATP = L-arginyl-tRNA(Arg) + AMP + diphosphate. In Chlamydia felis (strain Fe/C-56) (Chlamydophila felis), this protein is Arginine--tRNA ligase.